The primary structure comprises 308 residues: Porphobilinogen deaminase (308 aa).

Position 241 is an S-(dipyrrolylmethanemethyl)cysteine (C241).

It belongs to the HMBS family. In terms of assembly, monomer. It depends on dipyrromethane as a cofactor.

The catalysed reaction is 4 porphobilinogen + H2O = hydroxymethylbilane + 4 NH4(+). Its pathway is porphyrin-containing compound metabolism; protoporphyrin-IX biosynthesis; coproporphyrinogen-III from 5-aminolevulinate: step 2/4. In terms of biological role, tetrapolymerization of the monopyrrole PBG into the hydroxymethylbilane pre-uroporphyrinogen in several discrete steps. This is Porphobilinogen deaminase from Exiguobacterium sibiricum (strain DSM 17290 / CCUG 55495 / CIP 109462 / JCM 13490 / 255-15).